The sequence spans 460 residues: Putative E3 ubiquitin-protein ligase RING1b (460 aa).

A disordered region spans residues 1–85 (MPSLKSFSAA…SQSSSAGELS (85 aa)). Residues 21–31 (SEAERFNPEAV) show a composition bias toward basic and acidic residues. Acidic residues-rich tracts occupy residues 32–51 (EKEE…DEED) and 59–71 (EAED…EEED). The RING-type zinc-finger motif lies at 103–143 (CSICLGIIRKTRTVMECLHRFCRECIDKSMRLGNNECPTCR). The disordered stretch occupies residues 196–300 (QVSQRQSKAL…TEQTHQRDSR (105 aa)). Basic residues predominate over residues 220 to 234 (RSRRSGGGSRRRRNC). Residues 240-249 (DTSEANDDDD) are compositionally biased toward acidic residues. Residues 250–265 (QNKRGKDSSSDEPCER) are compositionally biased toward basic and acidic residues. Residues 276–290 (SSSNANNNDNCAGNG) are compositionally biased toward low complexity.

Heterodimer with RING1A. Interacts with CLF. Component of the PRC1-like complex, at least composed of RING1A, RING1B and LHP1.

The protein localises to the nucleus. The enzyme catalyses S-ubiquitinyl-[E2 ubiquitin-conjugating enzyme]-L-cysteine + [acceptor protein]-L-lysine = [E2 ubiquitin-conjugating enzyme]-L-cysteine + N(6)-ubiquitinyl-[acceptor protein]-L-lysine.. It functions in the pathway protein modification; protein ubiquitination. In terms of biological role, putative E3 ubiquitin-protein ligase that mediates monoubiquitination of 'Lys-119' of histone H2A (H2AK119ub), thereby playing a central role in histone code and gene regulation. Its function is as follows. As part of the PRC1-like complex, repress class I KNOX gene expression. PcG PRC1 complex maintains the transcriptionally repressive state of many genes, including Hox genes, throughout development. PcG PRC1 complex acts via chromatin remodeling and modification of histones, rendering chromatin heritably changed in its expressibility. This is Putative E3 ubiquitin-protein ligase RING1b (RING1B) from Arabidopsis thaliana (Mouse-ear cress).